The chain runs to 443 residues: 3-isopropylmalate dehydratase large subunit (443 aa).

Cysteine 347, cysteine 407, and cysteine 410 together coordinate [4Fe-4S] cluster.

The protein belongs to the aconitase/IPM isomerase family. LeuC type 1 subfamily. As to quaternary structure, heterodimer of LeuC and LeuD. [4Fe-4S] cluster serves as cofactor.

The enzyme catalyses (2R,3S)-3-isopropylmalate = (2S)-2-isopropylmalate. The protein operates within amino-acid biosynthesis; L-leucine biosynthesis; L-leucine from 3-methyl-2-oxobutanoate: step 2/4. Functionally, catalyzes the isomerization between 2-isopropylmalate and 3-isopropylmalate, via the formation of 2-isopropylmaleate. In Buchnera aphidicola subsp. Uroleucon sonchi, this protein is 3-isopropylmalate dehydratase large subunit.